The primary structure comprises 235 residues: Voltage-gated hydrogen channel 1 (235 aa).

Topologically, residues 1-62 are cytoplasmic; sequence MSRYLKHFTV…VMKKLFSSRR (62 aa). Residues 63-83 form a helical membrane-spanning segment; it reads FQIVIVFLVIVDALLVLGELL. Topologically, residues 84-100 are extracellular; the sequence is MDLKIIHPDKYHIAPKV. Residues 101-123 traverse the membrane as a helical segment; that stretch reads FHYLSLSILTIFLVEVGFKIFVY. Residues 124 to 131 lie on the Cytoplasmic side of the membrane; the sequence is GREFFHHK. The helical transmembrane segment at 132-152 threads the bilayer; the sequence is FEVLDSIVVVVSFILDLVLLF. Topologically, residues 153–159 are extracellular; sequence REHEFEA. The chain crosses the membrane as a helical span at residues 160–180; the sequence is VGLLILLRLWRVARIINGIIL. Over 181-235 the chain is Cytoplasmic; it reads SVKTRSEQQVSKLKQVNLKLATKVEQLQHSCVEKEQEIERLTRMLKQHGLLSEQT. Residues 187 to 228 adopt a coiled-coil conformation; it reads EQQVSKLKQVNLKLATKVEQLQHSCVEKEQEIERLTRMLKQH.

The protein belongs to the hydrogen channel family. In terms of assembly, homodimer.

Its subcellular location is the membrane. It is found in the cell membrane. In terms of biological role, mediates the voltage-dependent proton permeability of excitable membranes. Forms a proton-selective channel through which protons may pass in accordance with their electrochemical gradient. The sequence is that of Voltage-gated hydrogen channel 1 (HVCN1) from Gallus gallus (Chicken).